Reading from the N-terminus, the 326-residue chain is Acetyl-coenzyme A carboxylase carboxyl transferase subunit beta (326 aa).

Residues 32-301 (LWTKCPACGV…ILPPLNADSN (270 aa)) form the CoA carboxyltransferase N-terminal domain. Zn(2+) is bound by residues Cys-36, Cys-39, Cys-55, and Cys-58. The C4-type zinc-finger motif lies at 36–58 (CPACGVLTYTKDLQGNWMVCVEC).

Belongs to the AccD/PCCB family. As to quaternary structure, acetyl-CoA carboxylase is a heterohexamer composed of biotin carboxyl carrier protein (AccB), biotin carboxylase (AccC) and two subunits each of ACCase subunit alpha (AccA) and ACCase subunit beta (AccD). Requires Zn(2+) as cofactor.

The protein localises to the cytoplasm. The enzyme catalyses N(6)-carboxybiotinyl-L-lysyl-[protein] + acetyl-CoA = N(6)-biotinyl-L-lysyl-[protein] + malonyl-CoA. It functions in the pathway lipid metabolism; malonyl-CoA biosynthesis; malonyl-CoA from acetyl-CoA: step 1/1. Functionally, component of the acetyl coenzyme A carboxylase (ACC) complex. Biotin carboxylase (BC) catalyzes the carboxylation of biotin on its carrier protein (BCCP) and then the CO(2) group is transferred by the transcarboxylase to acetyl-CoA to form malonyl-CoA. This Synechocystis sp. (strain ATCC 27184 / PCC 6803 / Kazusa) protein is Acetyl-coenzyme A carboxylase carboxyl transferase subunit beta.